A 320-amino-acid polypeptide reads, in one-letter code: o-succinylbenzoate synthase (320 aa).

Residue Lys133 is the Proton donor of the active site. 3 residues coordinate Mg(2+): Asp161, Glu190, and Asp213. The active-site Proton acceptor is the Lys235.

This sequence belongs to the mandelate racemase/muconate lactonizing enzyme family. MenC type 1 subfamily. A divalent metal cation serves as cofactor.

It catalyses the reaction (1R,6R)-6-hydroxy-2-succinyl-cyclohexa-2,4-diene-1-carboxylate = 2-succinylbenzoate + H2O. Its pathway is quinol/quinone metabolism; 1,4-dihydroxy-2-naphthoate biosynthesis; 1,4-dihydroxy-2-naphthoate from chorismate: step 4/7. The protein operates within quinol/quinone metabolism; menaquinone biosynthesis. Functionally, converts 2-succinyl-6-hydroxy-2,4-cyclohexadiene-1-carboxylate (SHCHC) to 2-succinylbenzoate (OSB). This Salmonella newport (strain SL254) protein is o-succinylbenzoate synthase.